The sequence spans 167 residues: Heme-degrading monooxygenase (167 aa).

Residues 1–50 (MKKVFITTGTEHYLRQLMANYTGGNVTLLQNFSQSLLYQESTGEKLFQEG) are important for catalysis. The 88-residue stretch at 67–154 (VVVFEYIHLR…NNTQSGFSHE (88 aa)) folds into the ABM domain.

The protein belongs to the antibiotic biosynthesis monooxygenase family. Monomer.

Its subcellular location is the cytoplasm. In terms of biological role, catalyzes the degradation of heme to biliverdin in the presence of a suitable electron donor such as ascorbate, with the subsequent release of iron. Hardly any CO is released by the heme degradation reaction. Binds heme. Allows bacterial pathogens to use the host heme as an iron source. Release of iron from heme may play a crucial role in the pathogenicity of L.monocytogenes. The polypeptide is Heme-degrading monooxygenase (Listeria monocytogenes serovar 1/2a (strain ATCC BAA-679 / EGD-e)).